The following is a 162-amino-acid chain: Transcription antitermination protein RfaH (162 aa).

Belongs to the RfaH family. In terms of assembly, interacts with both the nontemplate DNA and the RNA polymerase (RNAP). Monomer in solution.

Functionally, enhances distal genes transcription elongation in a specialized subset of operons that encode extracytoplasmic components. RfaH is recruited into a multi-component RNA polymerase complex by the ops element, which is a short conserved DNA sequence located downstream of the main promoter of these operons. Once bound, RfaH suppresses pausing and inhibits Rho-dependent and intrinsic termination at a subset of sites. Termination signals are bypassed, which allows complete synthesis of long RNA chains. Enhances expression of several operons involved in synthesis of lipopolysaccharides, exopolysaccharides, hemolysin, and sex factor. Also negatively controls expression and surface presentation of AG43 and possibly another AG43-independent factor that mediates cell-cell interactions and biofilm formation. The protein is Transcription antitermination protein RfaH of Escherichia coli (strain K12).